The following is a 201-amino-acid chain: Protease (201 aa).

Residues His55, Asp72, and Cys122 contribute to the active site.

Belongs to the peptidase C5 family. Interacts with protease cofactor pVI-C; this interaction is necessary for protease activation.

The protein resides in the virion. The protein localises to the host nucleus. It carries out the reaction Cleaves proteins of the adenovirus and its host cell at two consensus sites: -Yaa-Xaa-Gly-Gly-|-Xaa- and -Yaa-Xaa-Gly-Xaa-|-Gly- (in which Yaa is Met, Ile or Leu, and Xaa is any amino acid).. Requires DNA and protease cofactor for maximal activation. Inside nascent virions, becomes partially activated by binding to the viral DNA, allowing it to cleave the cofactor that binds to the protease and fully activates it. Actin, like the viral protease cofactor, seems to act as a cofactor in the cleavage of cytokeratin 18 and of actin itself. Its function is as follows. Cleaves viral precursor proteins (pTP, pIIIa, pVI, pVII, pVIII, and pX) inside newly assembled particles giving rise to mature virions. Protease complexed to its cofactor slides along the viral DNA to specifically locate and cleave the viral precursors. Mature virions have a weakened organization compared to the unmature virions, thereby facilitating subsequent uncoating. Without maturation, the particle lacks infectivity and is unable to uncoat. Late in adenovirus infection, in the cytoplasm, may participate in the cytoskeleton destruction. Cleaves host cell cytoskeletal keratins K7 and K18. This chain is Protease, found in Bovine adenovirus 4 (BAdV-4).